The primary structure comprises 63 residues: Small ribosomal subunit protein eS27 (63 aa).

The Zn(2+) site is built by cysteine 18, cysteine 21, cysteine 37, and cysteine 40. The C4-type zinc-finger motif lies at 18 to 40; that stretch reads CIDCGNEQIVFSHPATKVRCLIC.

It belongs to the eukaryotic ribosomal protein eS27 family. In terms of assembly, part of the 30S ribosomal subunit. It depends on Zn(2+) as a cofactor.

The sequence is that of Small ribosomal subunit protein eS27 from Pyrococcus furiosus (strain ATCC 43587 / DSM 3638 / JCM 8422 / Vc1).